The following is a 163-amino-acid chain: Early nodulin-like protein 20 (163 aa).

Residues 1-25 (MMGKYLWALVYVTVMILIIVVEVES) form the signal peptide. In terms of domain architecture, Phytocyanin spans 26–126 (SLHRVGGGRY…GMKLAITVLP (101 aa)). Residues asparagine 42, asparagine 63, asparagine 73, asparagine 88, and asparagine 135 are each glycosylated (N-linked (GlcNAc...) asparagine). Residues cysteine 80 and cysteine 114 are joined by a disulfide bond. Serine 138 carries the GPI-anchor amidated serine lipid modification. Residues 139-163 (TTTPLIPPNAITAAILIFAFKALLL) constitute a propeptide, removed in mature form.

It belongs to the early nodulin-like (ENODL) family.

It is found in the cell membrane. May act as a carbohydrate transporter. This chain is Early nodulin-like protein 20, found in Arabidopsis thaliana (Mouse-ear cress).